The sequence spans 328 residues: Probable membrane-associated kinase regulator 4 (328 aa).

Residues 213–253 (GQIKTERPKKQSNGSVSGSHRRSFSVSMRRQAAKSSNNKSS) form a disordered region. Positions 223-240 (QSNGSVSGSHRRSFSVSM) are enriched in polar residues.

It is found in the cell membrane. The polypeptide is Probable membrane-associated kinase regulator 4 (MAKR4) (Arabidopsis thaliana (Mouse-ear cress)).